A 279-amino-acid chain; its full sequence is MEGASRQSLAAARSVLDQVTAVPIGATAGTVAPEVRRIAGDLSAVATLVGGEPTVRRALTDPGAPPQSRTGLAARLLGGQISQGALAVVSAAVAGRWSRPADLRYALEELAVEATLAEAEAADALDEVEDELFRFGRILGQNPQLSLALTDPAAPTSAKVGLVTRLLSGRAHPVTLRLAEQAVADREQGDIERRLEQLSRIAAARRGRVVAVVRTATVLDADQIARLKAAISRFFGRQIQLQIDLDPAVLGGVAVRVGDEVVDGTVLRRLAAARRGLTR.

Belongs to the ATPase delta chain family. In terms of assembly, F-type ATPases have 2 components, F(1) - the catalytic core - and F(0) - the membrane proton channel. F(1) has five subunits: alpha(3), beta(3), gamma(1), delta(1), epsilon(1). F(0) has three main subunits: a(1), b(2) and c(10-14). The alpha and beta chains form an alternating ring which encloses part of the gamma chain. F(1) is attached to F(0) by a central stalk formed by the gamma and epsilon chains, while a peripheral stalk is formed by the delta and b chains.

The protein localises to the cell membrane. In terms of biological role, f(1)F(0) ATP synthase produces ATP from ADP in the presence of a proton or sodium gradient. F-type ATPases consist of two structural domains, F(1) containing the extramembraneous catalytic core and F(0) containing the membrane proton channel, linked together by a central stalk and a peripheral stalk. During catalysis, ATP synthesis in the catalytic domain of F(1) is coupled via a rotary mechanism of the central stalk subunits to proton translocation. Functionally, this protein is part of the stalk that links CF(0) to CF(1). It either transmits conformational changes from CF(0) to CF(1) or is implicated in proton conduction. This is ATP synthase subunit delta from Parafrankia sp. (strain EAN1pec).